Reading from the N-terminus, the 344-residue chain is Ferrochelatase (344 aa).

His190 and Glu270 together coordinate Fe cation.

The protein belongs to the ferrochelatase family.

The protein resides in the cytoplasm. It carries out the reaction heme b + 2 H(+) = protoporphyrin IX + Fe(2+). It functions in the pathway porphyrin-containing compound metabolism; protoheme biosynthesis; protoheme from protoporphyrin-IX: step 1/1. Functionally, catalyzes the ferrous insertion into protoporphyrin IX. This Rickettsia felis (strain ATCC VR-1525 / URRWXCal2) (Rickettsia azadi) protein is Ferrochelatase.